We begin with the raw amino-acid sequence, 303 residues long: D-alanine--D-alanine ligase (303 aa).

An ATP-grasp domain is found at 104–300 (KLLWNAVGLP…FEKLVERVLE (197 aa)). Residue 132–187 (IAKLSLPVFVKPSSEGSSVGVFKVKTKEELLPAITAALEFDTIVLVEEFLTGAEYS) participates in ATP binding. Residues aspartate 254, glutamate 267, and asparagine 269 each coordinate Mg(2+).

Belongs to the D-alanine--D-alanine ligase family. It depends on Mg(2+) as a cofactor. Mn(2+) serves as cofactor.

It is found in the cytoplasm. The enzyme catalyses 2 D-alanine + ATP = D-alanyl-D-alanine + ADP + phosphate + H(+). It functions in the pathway cell wall biogenesis; peptidoglycan biosynthesis. In terms of biological role, cell wall formation. This chain is D-alanine--D-alanine ligase, found in Haemophilus ducreyi (strain 35000HP / ATCC 700724).